The chain runs to 356 residues: MQKTIFYVYPQHHDVSFKFVAQEHVKMLREKYIVYEIPTLSFYQFTPFRYPISIIHPLFYSMWKWGKIEFSFFEQYRTRVSALLGVEVADTDKIAKQYIEYANNFTDGMILNSEWSVNAFKNSGLKVPAYKVFHNFKDRLLAKNEELKLDDQILYIEKLKKEKNFKLIFISLWHSDYRKGADIFHVIAKELQKERNDIYFLVKSGLPRTDFQDLKMFNIFGNTSFDNIVKMYRISDLYLLTSRGGSFELNGLEAFISKIPALATKGGAWEDYYPPNLKDLLIDSCENPQIFPDNPIHIGNGVQMCIGKAIDKILEVLDNYDNYKAKIEENYNFWIENFSYNAVKKQLLEVMEKYSN.

This is an uncharacterized protein from Saccharolobus islandicus (Sulfolobus islandicus).